Consider the following 147-residue polypeptide: 6-pyruvoyl tetrahydrobiopterin synthase (147 aa).

H26 serves as a coordination point for Zn(2+). The active-site Proton acceptor is the C45. Zn(2+) is bound by residues H51 and H53. Active-site charge relay system residues include H92 and E136.

This sequence belongs to the PTPS family. In terms of assembly, homohexamer formed of two homotrimers in a head to head fashion. Zn(2+) is required as a cofactor.

It catalyses the reaction 7,8-dihydroneopterin 3'-triphosphate = 6-pyruvoyl-5,6,7,8-tetrahydropterin + triphosphate + H(+). It participates in cofactor biosynthesis; tetrahydrobiopterin biosynthesis; tetrahydrobiopterin from 7,8-dihydroneopterin triphosphate: step 1/3. Its function is as follows. Involved in the biosynthesis of tetrahydrobiopterin, an essential cofactor of aromatic amino acid hydroxylases. Catalyzes the transformation of 7,8-dihydroneopterin triphosphate into 6-pyruvoyl tetrahydropterin. This Poecilia reticulata (Guppy) protein is 6-pyruvoyl tetrahydrobiopterin synthase (pts).